Here is a 1058-residue protein sequence, read N- to C-terminus: Ubiquitin-like modifier-activating enzyme 1 (1058 aa).

Residues 1-47 (MSSSPLSKKRRVSGPDPKPGSNCSPAQSVLSEVPSVPTNGMAKNGSE) form a disordered region. Serine 2 is modified (N-acetylserine). Serine 2 is modified (N-acetylalanine). Residue serine 4 is modified to Phosphoserine. The short motif at 5-11 (PLSKKRR) is the Nuclear localization signal element. Phosphoserine is present on residues serine 13, serine 21, serine 24, and serine 46. Residues 21 to 30 (SNCSPAQSVL) show a composition bias toward polar residues. Tyrosine 55 carries the phosphotyrosine modification. A run of 2 repeats spans residues 63 to 199 (GHEA…GQLF) and 459 to 611 (GSDL…QVVI). The tract at residues 63–611 (GHEAMKRLQT…GTKGNVQVVI (549 aa)) is 2 approximate repeats. ATP is bound by residues alanine 478, aspartate 504, arginine 515, lysine 528, and 576–577 (DN). At lysine 528 the chain carries N6-succinyllysine. Cysteine 632 acts as the Glycyl thioester intermediate in catalysis. Lysine 671 carries the post-translational modification N6-acetyllysine. Phosphothreonine is present on threonine 800. A phosphoserine mark is found at serine 810, serine 816, serine 820, and serine 835. At lysine 980 the chain carries N6-acetyllysine.

Belongs to the ubiquitin-activating E1 family. In terms of assembly, monomer. Interacts with GAN (via BTB domain). ISGylated. In terms of tissue distribution, detected in erythrocytes (at protein level). Ubiquitous.

It is found in the cytoplasm. Its subcellular location is the mitochondrion. It localises to the nucleus. The enzyme catalyses ATP + ubiquitin + [E1 ubiquitin-activating enzyme]-L-cysteine = AMP + diphosphate + S-ubiquitinyl-[E1 ubiquitin-activating enzyme]-L-cysteine.. Its pathway is protein modification; protein ubiquitination. Catalyzes the first step in ubiquitin conjugation to mark cellular proteins for degradation through the ubiquitin-proteasome system. Activates ubiquitin by first adenylating its C-terminal glycine residue with ATP, and thereafter linking this residue to the side chain of a cysteine residue in E1, yielding a ubiquitin-E1 thioester and free AMP. Essential for the formation of radiation-induced foci, timely DNA repair and for response to replication stress. Promotes the recruitment of TP53BP1 and BRCA1 at DNA damage sites. The chain is Ubiquitin-like modifier-activating enzyme 1 (UBA1) from Homo sapiens (Human).